We begin with the raw amino-acid sequence, 199 residues long: Casparian strip membrane protein 1 (199 aa).

The Cytoplasmic segment spans residues 1 to 37 (MKSESAAIDIPESSSVAKGKAPLIAVSRNEKGGYRKG). Residues 38 to 58 (IAIFDFILRLAAIATALAAAA) form a helical membrane-spanning segment. At 59-87 (AMGTSDETLPFFTQFFQFQASYDDLPTFQ) the chain is on the extracellular side. A helical membrane pass occupies residues 88-108 (FFVIAIAIVGGYLVLSLPFSI). The Cytoplasmic segment spans residues 109–120 (VAIVRPHAVGPR). The helical transmembrane segment at 121-141 (LLLIILDAVALTLNTAAGAAA) threads the bilayer. Residues 142 to 173 (AAIVYLAHNGNSNTNWLAICQQYGDFCQKVSG) are Extracellular-facing. A helical membrane pass occupies residues 174–194 (AVVASFITVVIFVFLIVLSAF). Over 195 to 199 (ALRRH) the chain is Cytoplasmic.

The protein belongs to the Casparian strip membrane proteins (CASP) family. In terms of assembly, homodimer and heterodimers.

It is found in the cell membrane. Functionally, regulates membrane-cell wall junctions and localized cell wall deposition. Required for establishment of the Casparian strip membrane domain (CSD) and the subsequent formation of Casparian strips, a cell wall modification of the root endodermis that determines an apoplastic barrier between the intraorganismal apoplasm and the extraorganismal apoplasm and prevents lateral diffusion. This Populus trichocarpa (Western balsam poplar) protein is Casparian strip membrane protein 1.